Reading from the N-terminus, the 354-residue chain is UDP-N-acetylglucosamine--N-acetylmuramyl-(pentapeptide) pyrophosphoryl-undecaprenol N-acetylglucosamine transferase (354 aa).

UDP-N-acetyl-alpha-D-glucosamine-binding positions include 15–17 (TGG), asparagine 127, arginine 163, serine 191, isoleucine 244, 263–268 (ALTVSE), and glutamine 288.

The protein belongs to the glycosyltransferase 28 family. MurG subfamily.

The protein resides in the cell inner membrane. The enzyme catalyses di-trans,octa-cis-undecaprenyl diphospho-N-acetyl-alpha-D-muramoyl-L-alanyl-D-glutamyl-meso-2,6-diaminopimeloyl-D-alanyl-D-alanine + UDP-N-acetyl-alpha-D-glucosamine = di-trans,octa-cis-undecaprenyl diphospho-[N-acetyl-alpha-D-glucosaminyl-(1-&gt;4)]-N-acetyl-alpha-D-muramoyl-L-alanyl-D-glutamyl-meso-2,6-diaminopimeloyl-D-alanyl-D-alanine + UDP + H(+). The protein operates within cell wall biogenesis; peptidoglycan biosynthesis. Its function is as follows. Cell wall formation. Catalyzes the transfer of a GlcNAc subunit on undecaprenyl-pyrophosphoryl-MurNAc-pentapeptide (lipid intermediate I) to form undecaprenyl-pyrophosphoryl-MurNAc-(pentapeptide)GlcNAc (lipid intermediate II). The sequence is that of UDP-N-acetylglucosamine--N-acetylmuramyl-(pentapeptide) pyrophosphoryl-undecaprenol N-acetylglucosamine transferase from Vibrio cholerae serotype O1 (strain ATCC 39315 / El Tor Inaba N16961).